We begin with the raw amino-acid sequence, 65 residues long: Large ribosomal subunit protein bL33m (65 aa).

The transit peptide at 1–8 (MLLSAVSF) directs the protein to the mitochondrion.

It belongs to the bacterial ribosomal protein bL33 family. As to quaternary structure, component of the mitochondrial ribosome large subunit (39S) which comprises a 16S rRNA and about 50 distinct proteins.

The protein localises to the mitochondrion. The protein is Large ribosomal subunit protein bL33m (Mrpl33) of Mus musculus (Mouse).